Consider the following 214-residue polypeptide: Pyridoxine/pyridoxamine 5'-phosphate oxidase (214 aa).

Substrate-binding positions include 9–12 (RLDY) and K67. FMN contacts are provided by residues 62–67 (RMVLLK), 77–78 (FT), K84, and Q106. Residues Y124, R128, and S132 each contribute to the substrate site. FMN-binding positions include 141 to 142 (QS) and W186. Position 192 to 194 (192 to 194 (RLH)) interacts with substrate. R196 is a binding site for FMN.

The protein belongs to the pyridoxamine 5'-phosphate oxidase family. Homodimer. FMN is required as a cofactor.

It catalyses the reaction pyridoxamine 5'-phosphate + O2 + H2O = pyridoxal 5'-phosphate + H2O2 + NH4(+). It carries out the reaction pyridoxine 5'-phosphate + O2 = pyridoxal 5'-phosphate + H2O2. Its pathway is cofactor metabolism; pyridoxal 5'-phosphate salvage; pyridoxal 5'-phosphate from pyridoxamine 5'-phosphate: step 1/1. The protein operates within cofactor metabolism; pyridoxal 5'-phosphate salvage; pyridoxal 5'-phosphate from pyridoxine 5'-phosphate: step 1/1. Its function is as follows. Catalyzes the oxidation of either pyridoxine 5'-phosphate (PNP) or pyridoxamine 5'-phosphate (PMP) into pyridoxal 5'-phosphate (PLP). The protein is Pyridoxine/pyridoxamine 5'-phosphate oxidase of Microcystis aeruginosa (strain NIES-843 / IAM M-2473).